The chain runs to 1165 residues: Integrin alpha-L (1165 aa).

The signal sequence occupies residues methionine 1–serine 23. Residues tyrosine 24–glutamate 1084 lie on the Extracellular side of the membrane. FG-GAP repeat units lie at residues arginine 29–proline 80 and valine 81–leucine 138. A glycan (N-linked (GlcNAc...) asparagine) is linked at asparagine 33. Cysteine 71 and cysteine 78 form a disulfide bridge. Asparagine 86 carries N-linked (GlcNAc...) asparagine glycosylation. Cysteine 108 and cysteine 126 are joined by a disulfide. The region spanning aspartate 153–leucine 324 is the VWFA domain. The N-linked (GlcNAc...) asparagine glycan is linked to asparagine 185. 5 FG-GAP repeats span residues serine 335–phenylalanine 386, valine 387–tryptophan 442, serine 443–methionine 503, valine 504–proline 560, and glutamine 564–alanine 624. Aspartate 465, aspartate 467, aspartate 469, glutamate 473, aspartate 527, asparagine 529, aspartate 531, aspartate 535, aspartate 587, aspartate 591, and aspartate 595 together coordinate Ca(2+). N-linked (GlcNAc...) asparagine glycans are attached at residues asparagine 646, asparagine 667, and asparagine 723. Residues cysteine 650 and cysteine 704 are joined by a disulfide bond. 2 cysteine pairs are disulfide-bonded: cysteine 768–cysteine 774 and cysteine 842–cysteine 858. N-linked (GlcNAc...) asparagine glycosylation is found at asparagine 859, asparagine 894, and asparagine 929. 2 cysteine pairs are disulfide-bonded: cysteine 994–cysteine 1009 and cysteine 1017–cysteine 1048. N-linked (GlcNAc...) asparagine glycans are attached at residues asparagine 1056 and asparagine 1067. A helical transmembrane segment spans residues methionine 1085–isoleucine 1105. The Cytoplasmic portion of the chain corresponds to alanine 1106–aspartate 1165. The GFFKR motif signature appears at glycine 1111–arginine 1115. A disordered region spans residues alanine 1123–aspartate 1165. Positions glutamate 1140–glutamate 1159 are enriched in basic and acidic residues.

This sequence belongs to the integrin alpha chain family. As to quaternary structure, heterodimer of an alpha and a beta subunit. The ITGAL alpha subunit associates with the ITGB2 beta subunit. Interacts with THBD. Interacts with CD226. Post-translationally, in resting T-cells, up to 40% of surface ITGAL is constitutively phosphorylated. Phosphorylation causes conformational changes needed for ligand binding and is necessary for the activation by some physiological agents.

Its subcellular location is the cell membrane. In terms of biological role, integrin ITGAL/ITGB2 is a receptor for ICAM1, ICAM2, ICAM3 and ICAM4. Integrin ITGAL/ITGB2 is a receptor for F11R. Integrin ITGAL/ITGB2 is a receptor for the secreted form of ubiquitin-like protein ISG15; the interaction is mediated by ITGAL. Involved in a variety of immune phenomena including leukocyte-endothelial cell interaction, cytotoxic T-cell mediated killing, and antibody dependent killing by granulocytes and monocytes. Contributes to natural killer cell cytotoxicity. Involved in leukocyte adhesion and transmigration of leukocytes including T-cells and neutrophils. Acts as a platform at the immunological synapse to translate TCR engagement and density of the ITGAL ligand ICAM1 into graded adhesion. Required for generation of common lymphoid progenitor cells in bone marrow, indicating the role in lymphopoiesis. Integrin ITGAL/ITGB2 in association with ICAM3, contributes to apoptotic neutrophil phagocytosis by macrophages. The sequence is that of Integrin alpha-L from Bos taurus (Bovine).